We begin with the raw amino-acid sequence, 427 residues long: Gamma-glutamyl phosphate reductase (427 aa).

The protein belongs to the gamma-glutamyl phosphate reductase family.

It localises to the cytoplasm. It carries out the reaction L-glutamate 5-semialdehyde + phosphate + NADP(+) = L-glutamyl 5-phosphate + NADPH + H(+). Its pathway is amino-acid biosynthesis; L-proline biosynthesis; L-glutamate 5-semialdehyde from L-glutamate: step 2/2. In terms of biological role, catalyzes the NADPH-dependent reduction of L-glutamate 5-phosphate into L-glutamate 5-semialdehyde and phosphate. The product spontaneously undergoes cyclization to form 1-pyrroline-5-carboxylate. The polypeptide is Gamma-glutamyl phosphate reductase (Rhizobium rhizogenes (strain K84 / ATCC BAA-868) (Agrobacterium radiobacter)).